Here is a 166-residue protein sequence, read N- to C-terminus: Endoribonuclease YbeY (166 aa).

The Zn(2+) site is built by His-136, His-140, and His-146.

Belongs to the endoribonuclease YbeY family. Requires Zn(2+) as cofactor.

It is found in the cytoplasm. Single strand-specific metallo-endoribonuclease involved in late-stage 70S ribosome quality control and in maturation of the 3' terminus of the 16S rRNA. This is Endoribonuclease YbeY from Synechococcus sp. (strain CC9605).